Reading from the N-terminus, the 208-residue chain is CKLF-like MARVEL transmembrane domain-containing protein 4 (208 aa).

Residues 1–11 show a composition bias toward acidic residues; it reads MRGGEELDGFE. The interval 1 to 38 is disordered; the sequence is MRGGEELDGFEGEASSTSMISGASSPYQPTTEPVSQRR. Residues 15-25 are compositionally biased toward low complexity; the sequence is SSTSMISGASS. The MARVEL domain maps to 49–176; it reads YLRGALGRLK…STFLAMQKWR (128 aa). 4 helical membrane passes run 59–79, 85–105, 123–143, and 151–171; these read VAQV…MECS, YFFE…LILF, LVNT…LAAL, and IAAV…TFLA. Ser-194 carries the post-translational modification Phosphoserine.

This sequence belongs to the chemokine-like factor family. As to quaternary structure, interacts with PD1L1 and CMTM6.

The protein resides in the membrane. Acts as a backup for CMTM6 to regulate plasma membrane expression of PD-L1/CD274, an immune inhibitory ligand critical for immune tolerance to self and antitumor immunity. May protect PD-L1/CD274 from being polyubiquitinated and targeted for degradation. In Mus musculus (Mouse), this protein is CKLF-like MARVEL transmembrane domain-containing protein 4.